Here is a 299-residue protein sequence, read N- to C-terminus: Glycine--tRNA ligase alpha subunit (299 aa).

It belongs to the class-II aminoacyl-tRNA synthetase family. As to quaternary structure, tetramer of two alpha and two beta subunits.

The protein localises to the cytoplasm. It carries out the reaction tRNA(Gly) + glycine + ATP = glycyl-tRNA(Gly) + AMP + diphosphate. The chain is Glycine--tRNA ligase alpha subunit from Caulobacter vibrioides (strain ATCC 19089 / CIP 103742 / CB 15) (Caulobacter crescentus).